A 617-amino-acid polypeptide reads, in one-letter code: Proline--tRNA ligase (617 aa).

This sequence belongs to the class-II aminoacyl-tRNA synthetase family. ProS type 1 subfamily. As to quaternary structure, homodimer.

It is found in the cytoplasm. It catalyses the reaction tRNA(Pro) + L-proline + ATP = L-prolyl-tRNA(Pro) + AMP + diphosphate. Its function is as follows. Catalyzes the attachment of proline to tRNA(Pro) in a two-step reaction: proline is first activated by ATP to form Pro-AMP and then transferred to the acceptor end of tRNA(Pro). As ProRS can inadvertently accommodate and process non-cognate amino acids such as alanine and cysteine, to avoid such errors it has two additional distinct editing activities against alanine. One activity is designated as 'pretransfer' editing and involves the tRNA(Pro)-independent hydrolysis of activated Ala-AMP. The other activity is designated 'posttransfer' editing and involves deacylation of mischarged Ala-tRNA(Pro). The misacylated Cys-tRNA(Pro) is not edited by ProRS. The chain is Proline--tRNA ligase from Streptococcus pneumoniae (strain P1031).